Here is a 345-residue protein sequence, read N- to C-terminus: Fe-S cluster assembly protein DRE2 (345 aa).

The N-terminal SAM-like domain stretch occupies residues 11–166 (FSHSSNGVVL…SIGSSSGSSS (156 aa)). The interval 147–166 (SKPATASSSFSIGSSSGSSS) is disordered. Over residues 153 to 166 (SSSFSIGSSSGSSS) the composition is skewed to low complexity. Residues 167–210 (ALPLRRKLGSGASANAKKSLWATQPASANDLIDEASLLRDADFV) form a linker region. 4 residues coordinate [2Fe-2S] cluster: cysteine 220, cysteine 233, cysteine 236, and cysteine 238. The fe-S binding site A stretch occupies residues 220-238 (CDVGAGQGKKKKACKGCTC). Cysteine 307, cysteine 310, cysteine 318, and cysteine 321 together coordinate [4Fe-4S] cluster. 2 short sequence motifs (cx2C motif) span residues 307-310 (CGSC) and 318-321 (CSSC). The segment at 307–321 (CGSCFLGDAFRCSSC) is fe-S binding site B.

This sequence belongs to the anamorsin family. Monomer. Interacts with TAH18. Interacts with MIA40. Requires [2Fe-2S] cluster as cofactor. It depends on [4Fe-4S] cluster as a cofactor.

The protein resides in the cytoplasm. The protein localises to the mitochondrion intermembrane space. Its function is as follows. Component of the cytosolic iron-sulfur (Fe-S) protein assembly (CIA) machinery required for the maturation of extramitochondrial Fe-S proteins. Part of an electron transfer chain functioning in an early step of cytosolic Fe-S biogenesis, facilitating the de novo assembly of a [4Fe-4S] cluster on the scaffold complex CFD1-NBP35. Electrons are transferred to DRE2 from NADPH via the FAD- and FMN-containing protein TAH18. TAH18-DRE2 are also required for the assembly of the diferric tyrosyl radical cofactor of ribonucleotide reductase (RNR), probably by providing electrons for reduction during radical cofactor maturation in the catalytic small subunit RNR2. This is Fe-S cluster assembly protein DRE2 from Mycosarcoma maydis (Corn smut fungus).